Consider the following 369-residue polypeptide: Core histone macro-H2A.1 (369 aa).

2 positions are modified to N6-lactoyllysine; alternate: Lys-7 and Lys-9. The region spanning 15-90 is the Histone H2A domain; that stretch reads RSAKAGVIFP…ILLAVANDEE (76 aa). Position 18 is an N6-methyllysine (Lys-18). N6-acetyllysine; alternate is present on Lys-116. Lys-116 participates in a covalent cross-link: Glycyl lysine isopeptide (Lys-Gly) (interchain with G-Cter in ubiquitin); alternate. Lys-117 is covalently cross-linked (Glycyl lysine isopeptide (Lys-Gly) (interchain with G-Cter in ubiquitin)). N6-acetyllysine; alternate is present on Lys-123. Position 123 is an N6,N6-dimethyllysine; alternate (Lys-123). A Glycyl lysine isopeptide (Lys-Gly) (interchain with G-Cter in SUMO2); alternate cross-link involves residue Lys-123. A disordered region spans residues 128–180; the sequence is ITPPPAKKAKSPSQKKTVSKKTGGKKGARKSKKKQGEVSKSASADSTTEGTPA. Thr-129 is subject to Phosphothreonine. The segment covering 144–160 has biased composition (basic residues); the sequence is TVSKKTGGKKGARKSKK. Residues 165–177 are compositionally biased toward polar residues; that stretch reads VSKSASADSTTEG. Residue Lys-167 forms a Glycyl lysine isopeptide (Lys-Gly) (interchain with G-Cter in SUMO2) linkage. Phosphoserine occurs at positions 170 and 173. Residue Thr-178 is modified to Phosphothreonine. The Macro domain maps to 184–367; that stretch reads TVLSTKSLFL…IYVQEMAKLD (184 aa). Lys-189 is covalently cross-linked (Glycyl lysine isopeptide (Lys-Gly) (interchain with G-Cter in SUMO2)). 8 residues coordinate a glycoprotein: Asp-203, Ile-204, Val-226, Ser-275, Gly-312, Ser-313, Gly-314, and Asn-316. Residue Lys-320 forms a Glycyl lysine isopeptide (Lys-Gly) (interchain with G-Cter in SUMO2) linkage.

The protein belongs to the histone H2A family. The nucleosome is a histone octamer containing two molecules each of H2A, H2B, H3 and H4 assembled in one H3-H4 heterotetramer and two H2A-H2B heterodimers. ADP-ribosylated. In terms of processing, monoubiquitinated at either Lys-116 or Lys-117. May also be polyubiquitinated. Ubiquitination is mediated by the CUL3/SPOP E3 complex and does not promote proteasomal degradation. Instead, it is required for enrichment in inactive X chromosome chromatin. Present in liver (at protein level).

It localises to the nucleus. Its subcellular location is the chromosome. In terms of biological role, variant histone H2A which replaces conventional H2A in a subset of nucleosomes where it represses transcription. Nucleosomes wrap and compact DNA into chromatin, limiting DNA accessibility to the cellular machineries which require DNA as a template. Histones thereby play a central role in transcription regulation, DNA repair, DNA replication and chromosomal stability. DNA accessibility is regulated via a complex set of post-translational modifications of histones, also called histone code, and nucleosome remodeling. Functionally, isoform that specifically binds poly-ADP-ribose and O-acetyl-ADP-ribose and plays a key role in NAD(+) metabolism. Able to bind to the ends of poly-ADP-ribose chains created by PARP1 and cap them. This prevents PARP1 from further addition of ADP-ribose and thus limits the consumption of nuclear NAD(+), allowing the cell to maintain proper NAD(+) levels in both the nucleus and the mitochondria to promote proper mitochondrial respiration. In contrast to isoform 1, does not bind poly-ADP-ribose. The chain is Core histone macro-H2A.1 from Gallus gallus (Chicken).